The primary structure comprises 496 residues: Xylulose kinase (496 aa).

Met83–His84 contacts substrate. Asp237 functions as the Proton acceptor in the catalytic mechanism.

This sequence belongs to the FGGY kinase family.

It carries out the reaction D-xylulose + ATP = D-xylulose 5-phosphate + ADP + H(+). Its function is as follows. Catalyzes the phosphorylation of D-xylulose to D-xylulose 5-phosphate. In Staphylococcus epidermidis (strain ATCC 35984 / DSM 28319 / BCRC 17069 / CCUG 31568 / BM 3577 / RP62A), this protein is Xylulose kinase.